The primary structure comprises 160 residues: NADH-quinone oxidoreductase subunit B (160 aa).

Cys37, Cys38, Cys102, and Cys132 together coordinate [4Fe-4S] cluster.

The protein belongs to the complex I 20 kDa subunit family. As to quaternary structure, NDH-1 is composed of 14 different subunits. Subunits NuoB, C, D, E, F, and G constitute the peripheral sector of the complex. The cofactor is [4Fe-4S] cluster.

The protein localises to the cell membrane. The enzyme catalyses a quinone + NADH + 5 H(+)(in) = a quinol + NAD(+) + 4 H(+)(out). Its function is as follows. NDH-1 shuttles electrons from NADH, via FMN and iron-sulfur (Fe-S) centers, to quinones in the respiratory chain. Couples the redox reaction to proton translocation (for every two electrons transferred, four hydrogen ions are translocated across the cytoplasmic membrane), and thus conserves the redox energy in a proton gradient. The chain is NADH-quinone oxidoreductase subunit B from Polynucleobacter asymbioticus (strain DSM 18221 / CIP 109841 / QLW-P1DMWA-1) (Polynucleobacter necessarius subsp. asymbioticus).